A 177-amino-acid polypeptide reads, in one-letter code: Large ribosomal subunit protein uL6 (177 aa).

Belongs to the universal ribosomal protein uL6 family. Part of the 50S ribosomal subunit.

Functionally, this protein binds to the 23S rRNA, and is important in its secondary structure. It is located near the subunit interface in the base of the L7/L12 stalk, and near the tRNA binding site of the peptidyltransferase center. The protein is Large ribosomal subunit protein uL6 of Salmonella arizonae (strain ATCC BAA-731 / CDC346-86 / RSK2980).